Reading from the N-terminus, the 1327-residue chain is MGSKGKKGKSSEVNLETSKNKEKNIKGKKKNSLDPIEKNKQETAGLQTTSRPTAKQLVGGSSWTGKIPVVLLNEHCQRSKWEKSDVKVRQTKSKNYIFTSVVLAKKDPKNPSILDHVSLIPPKSYYENGYFPEKETLVEARNVGAVYALHRIMSHKSLQHALPPEHRNIWFDMEKQKKEELKNKHSWLYNEDPFKAAKELQAARASSAAKPPPKASQKNEKVSLTSIKNTSLSHFSKFNFKYALPIHMSLENRRSLENLFRNMNTWDILEDTKNLEPDTSIVNDLISLGFRDIHAKEACQYCVSLEDALEWLIIHVPEDDLPTRFLPSDYTTGISVQNLNSANLAIHYNAKRISETGYSFDLCFSTLQTFENNIQISSEYLQQHLIGESFDGNISLEPNSTEWDDDVSALQSILDNKVSKIENGCRVRIDYPTSEFGELFVDFRRPARSYPAHIPLMSLSSTKRMASYIKLSILKKMVVYAMDLRGECMLSWLYNHLQENIEDFLQNIGSLLNISAATIGVSLSSQNKSAPTAKKNNSFKPKLFRRSRELSEKLCNNWSERVKSPSYQLKVREREKLPAWESRRKIMDAIQHSQVVVISGETGSGKSTQVVQFILDHYLSSGEKDLQTVVCTQPRRISAISLAERVAFERDTTVGKEVGYSVHGEKSISKETLLEFCTTGLLLRRIQQHGLGFLSTLSCVVVDEVHERSIENDILLTLLKLVISRIPNLKVILMSATVNSDTFKYYFGNAGHLHIHGRTFPIKDYYIEDFAPKLNEDDDEEDVPRRKKKEYEIDYHLISRLVSSIDAELGSSSGSILVFLPGVSNIARCIREIKSKDGSKFEVLPLHASLNTSEQRRCFKTYTKRKIICATNIAETSITIDDVVAVIDSGRVKQIDYDVERDLVTFKETWASRAACQQRRGRAGRVKKGICYKLYTRGFEEKGMLGQTPPEVLRTALSQVCLNVVPLVKRFSSAGNSVNQGSIKKFMNSLIDPPNDATVDLALKKLIQVGALTVSEDLTGLGEYLVSLPIDLKLGKLLVFGSIFGYLEPALTITAILSTKSPFLGDDEAREIRSKQSQGWGDVLADARVYHNWLEILETRGVKKTVQWCEEMHLHYTTLQQIRQNRNELSEAAQLLELTTKKLTGNFDWYSTENLTVLSTLIAAALSPNVVKCVYPDKKFVASFSGSLEMEQEARLTKFYDQNNQRLFIHPSSTMFVNSPNASRCTFVAYEQKVETTKPFLRNCTPINTYGMILLGANDILIDPLGKGLILDQAYCIKAWPKVVILLKMLKRCLDASLHERLESSSGLNYESEIHQCIRTLIAGNGV.

Disordered regions lie at residues 1–58 (MGSK…KQLV) and 201–222 (QAAR…NEKV). A compositionally biased stretch (basic and acidic residues) spans 18-41 (SKNKEKNIKGKKKNSLDPIEKNKQ). The span at 42–58 (ETAGLQTTSRPTAKQLV) shows a compositional bias: polar residues. The UBA domain occupies 276-315 (EPDTSIVNDLISLGFRDIHAKEACQYCVSLEDALEWLIIH). The RWD domain occupies 405–504 (DDVSALQSIL…NHLQENIEDF (100 aa)). A Helicase ATP-binding domain is found at 587 to 756 (MDAIQHSQVV…FGNAGHLHIH (170 aa)). Position 600-607 (600-607 (GETGSGKS)) interacts with ATP. The DEAH box motif lies at 703–706 (DEVH). One can recognise a Helicase C-terminal domain in the interval 797–968 (LISRLVSSID…QVCLNVVPLV (172 aa)).

This sequence belongs to the DEAD box helicase family. DEAH subfamily.

It localises to the cytoplasm. It carries out the reaction ATP + H2O = ADP + phosphate + H(+). In terms of biological role, probable ATP-binding RNA helicase. The protein is Putative ATP-dependent RNA helicase ucp12 (ucp12) of Schizosaccharomyces pombe (strain 972 / ATCC 24843) (Fission yeast).